The chain runs to 397 residues: Oxygen-dependent coproporphyrinogen-III oxidase, chloroplastic (397 aa).

A disordered region spans residues 76–95; sequence ESDMGSNVTSNSSSVRGRFE. The span at 79–90 shows a compositional bias: polar residues; that stretch reads MGSNVTSNSSSV. The interval 135–144 is important for dimerization; it reads VLQDGAVFEK. Substrate is bound at residue serine 185. The Proton donor role is filled by histidine 199. Substrate contacts are provided by residues 201–203 and 355–360; these read NYR and GGRIES. Positions 337-372 are important for dimerization; it reads YVEFNLVYDRGTTFGLKTGGRIESILVSLPLTARWE.

It belongs to the aerobic coproporphyrinogen-III oxidase family. As to quaternary structure, homodimer.

It is found in the plastid. Its subcellular location is the chloroplast. It catalyses the reaction coproporphyrinogen III + O2 + 2 H(+) = protoporphyrinogen IX + 2 CO2 + 2 H2O. It participates in porphyrin-containing compound metabolism; protoporphyrin-IX biosynthesis; protoporphyrinogen-IX from coproporphyrinogen-III (O2 route): step 1/1. Involved in the heme and chlorophyll biosynthesis. Catalyzes the aerobic oxidative decarboxylation of propionate groups of rings A and B of coproporphyrinogen-III to yield the vinyl groups in protoporphyrinogen-IX. In Nicotiana tabacum (Common tobacco), this protein is Oxygen-dependent coproporphyrinogen-III oxidase, chloroplastic (CPX).